Reading from the N-terminus, the 199-residue chain is NAD(P)H dehydrogenase (quinone) (199 aa).

A Flavodoxin-like domain is found at 4 to 190 (ILVLYYSMYG…AIARFQGEHV (187 aa)). FMN-binding positions include 10–15 (SMYGHI) and 79–81 (TRF). Position 12 (Tyr-12) interacts with NAD(+). Trp-99 lines the substrate pocket. Residues 114 to 119 (STGTGG) and His-134 contribute to the FMN site.

This sequence belongs to the WrbA family. FMN is required as a cofactor.

The enzyme catalyses a quinone + NADH + H(+) = a quinol + NAD(+). It catalyses the reaction a quinone + NADPH + H(+) = a quinol + NADP(+). This chain is NAD(P)H dehydrogenase (quinone), found in Yersinia enterocolitica serotype O:8 / biotype 1B (strain NCTC 13174 / 8081).